A 389-amino-acid chain; its full sequence is Flap endonuclease 1 (389 aa).

Residues 1–110 are N-domain; the sequence is MGIKGLMKLL…GELAKRSDRR (110 aa). Position 35 (aspartate 35) interacts with Mg(2+). 2 residues coordinate DNA: arginine 48 and arginine 76. Mg(2+) is bound at residue aspartate 92. The disordered stretch occupies residues 103–124; the sequence is LAKRSDRRQEAQKALEEATEKG. The I-domain stretch occupies residues 128-259; that stretch reads DIDRFNKRLV…KKAYAGIKEH (132 aa). Mg(2+)-binding residues include glutamate 164, glutamate 166, aspartate 185, and aspartate 187. Glutamate 164 contributes to the DNA binding site. DNA contacts are provided by glycine 237 and aspartate 239. Residue aspartate 239 coordinates Mg(2+). The interaction with PCNA stretch occupies residues 350–358; that stretch reads SQKRLDSFF. Residues 362–389 are disordered; the sequence is PSANGAKKRKAPAAKGGKKAATAKKGKK. A compositionally biased stretch (basic residues) spans 367–389; that stretch reads AKKRKAPAAKGGKKAATAKKGKK.

Belongs to the XPG/RAD2 endonuclease family. FEN1 subfamily. As to quaternary structure, interacts with PCNA. Three molecules of FEN1 bind to one PCNA trimer with each molecule binding to one PCNA monomer. PCNA stimulates the nuclease activity without altering cleavage specificity. Requires Mg(2+) as cofactor. Post-translationally, phosphorylated. Phosphorylation upon DNA damage induces relocalization to the nuclear plasma.

It localises to the nucleus. The protein localises to the nucleolus. The protein resides in the nucleoplasm. It is found in the mitochondrion. Its function is as follows. Structure-specific nuclease with 5'-flap endonuclease and 5'-3' exonuclease activities involved in DNA replication and repair. During DNA replication, cleaves the 5'-overhanging flap structure that is generated by displacement synthesis when DNA polymerase encounters the 5'-end of a downstream Okazaki fragment. It enters the flap from the 5'-end and then tracks to cleave the flap base, leaving a nick for ligation. Also involved in the long patch base excision repair (LP-BER) pathway, by cleaving within the apurinic/apyrimidinic (AP) site-terminated flap. Acts as a genome stabilization factor that prevents flaps from equilibrating into structures that lead to duplications and deletions. Also possesses 5'-3' exonuclease activity on nicked or gapped double-stranded DNA, and exhibits RNase H activity. Also involved in replication and repair of rDNA and in repairing mitochondrial DNA. The protein is Flap endonuclease 1 of Phytophthora infestans (strain T30-4) (Potato late blight agent).